The sequence spans 505 residues: 2,3-bisphosphoglycerate-independent phosphoglycerate mutase (505 aa).

Mn(2+) contacts are provided by Asp-13 and Ser-63. The active-site Phosphoserine intermediate is the Ser-63. Residues His-124, 153-154, Arg-183, Arg-189, 254-257, and Lys-330 contribute to the substrate site; these read RD and RADR. Mn(2+) is bound by residues Asp-396, His-400, Asp-437, His-438, and His-456.

The protein belongs to the BPG-independent phosphoglycerate mutase family. Monomer. Mn(2+) serves as cofactor.

The enzyme catalyses (2R)-2-phosphoglycerate = (2R)-3-phosphoglycerate. Its pathway is carbohydrate degradation; glycolysis; pyruvate from D-glyceraldehyde 3-phosphate: step 3/5. Catalyzes the interconversion of 2-phosphoglycerate and 3-phosphoglycerate. This is 2,3-bisphosphoglycerate-independent phosphoglycerate mutase from Roseobacter denitrificans (strain ATCC 33942 / OCh 114) (Erythrobacter sp. (strain OCh 114)).